A 299-amino-acid polypeptide reads, in one-letter code: Proline iminopeptidase (299 aa).

The AB hydrolase-1 domain occupies 29-279 (PLLLLHGGPG…SRHMAFIDEP (251 aa)). Residue Ser105 is the Nucleophile of the active site. Asp245 is an active-site residue. The active-site Proton donor is the His272.

It belongs to the peptidase S33 family.

It localises to the cell envelope. The enzyme catalyses Release of N-terminal proline from a peptide.. Releases the N-terminal proline from various substrates. This Levilactobacillus brevis (strain ATCC 367 / BCRC 12310 / CIP 105137 / JCM 1170 / LMG 11437 / NCIMB 947 / NCTC 947) (Lactobacillus brevis) protein is Proline iminopeptidase.